Here is a 111-residue protein sequence, read N- to C-terminus: 2Fe-2S ferredoxin (111 aa).

The region spanning 1 to 104 (MPKVLFLPHK…DIEVEIPLYN (104 aa)) is the 2Fe-2S ferredoxin-type domain. [2Fe-2S] cluster is bound by residues cysteine 42, cysteine 48, cysteine 51, and cysteine 87.

This sequence belongs to the adrenodoxin/putidaredoxin family. The cofactor is [2Fe-2S] cluster.

Functionally, ferredoxin are iron-sulfur proteins that transfer electrons in a wide variety of metabolic reactions. This is 2Fe-2S ferredoxin (fdx) from Buchnera aphidicola subsp. Acyrthosiphon pisum (strain APS) (Acyrthosiphon pisum symbiotic bacterium).